The sequence spans 189 residues: Peptidyl-tRNA hydrolase (189 aa).

Residue Y15 coordinates tRNA. H20 acts as the Proton acceptor in catalysis. Residues F66, N68, and N114 each coordinate tRNA.

This sequence belongs to the PTH family. As to quaternary structure, monomer.

The protein localises to the cytoplasm. The enzyme catalyses an N-acyl-L-alpha-aminoacyl-tRNA + H2O = an N-acyl-L-amino acid + a tRNA + H(+). Its function is as follows. Hydrolyzes ribosome-free peptidyl-tRNAs (with 1 or more amino acids incorporated), which drop off the ribosome during protein synthesis, or as a result of ribosome stalling. Functionally, catalyzes the release of premature peptidyl moieties from peptidyl-tRNA molecules trapped in stalled 50S ribosomal subunits, and thus maintains levels of free tRNAs and 50S ribosomes. This Streptococcus suis (strain 98HAH33) protein is Peptidyl-tRNA hydrolase.